The following is a 510-amino-acid chain: uncharacterized protein (510 aa).

A signal peptide spans 1-19 (MLILLILYFLFLQLHIFDS). A helical membrane pass occupies residues 28–48 (IYIHYAICKFIFLLEIYKLIA).

It is found in the host membrane. This is an uncharacterized protein from Sulfolobus islandicus rod-shaped virus 1 (SIRV-1).